Consider the following 381-residue polypeptide: Cytochrome b (381 aa).

4 consecutive transmembrane segments (helical) span residues 32-52 (GGSL…LLAM), 76-98 (MILR…LHVL), 113-133 (VWIS…IGYV), and 179-199 (FYSF…FHIA). Heme b is bound by residues H82 and H96. Positions 183 and 197 each coordinate heme b. H202 contacts a ubiquinone. 4 helical membrane-spanning segments follow: residues 225–245 (FGAK…ILVF), 289–309 (AMGV…PFIG), 318–338 (ITEW…WLGG), and 345–365 (TSFV…VCQP).

This sequence belongs to the cytochrome b family. The main subunits of complex b-c1 are: cytochrome b, cytochrome c1 and the Rieske protein. It depends on heme b as a cofactor.

It is found in the mitochondrion inner membrane. Its function is as follows. Component of the ubiquinol-cytochrome c reductase complex (complex III or cytochrome b-c1 complex) that is part of the mitochondrial respiratory chain. The b-c1 complex mediates electron transfer from ubiquinol to cytochrome c. Contributes to the generation of a proton gradient across the mitochondrial membrane that is then used for ATP synthesis. The polypeptide is Cytochrome b (MT-CYB) (Chlamydomonas reinhardtii (Chlamydomonas smithii)).